The sequence spans 228 residues: Octanoyltransferase (228 aa).

The region spanning 31–212 (GETDGILILL…KFSEVFGIHF (182 aa)) is the BPL/LPL catalytic domain. Substrate is bound by residues 76 to 83 (RGGKITFH), 143 to 145 (AIG), and 156 to 158 (GIA). Cysteine 174 acts as the Acyl-thioester intermediate in catalysis.

It belongs to the LipB family.

It is found in the cytoplasm. The catalysed reaction is octanoyl-[ACP] + L-lysyl-[protein] = N(6)-octanoyl-L-lysyl-[protein] + holo-[ACP] + H(+). The protein operates within protein modification; protein lipoylation via endogenous pathway; protein N(6)-(lipoyl)lysine from octanoyl-[acyl-carrier-protein]: step 1/2. In terms of biological role, catalyzes the transfer of endogenously produced octanoic acid from octanoyl-acyl-carrier-protein onto the lipoyl domains of lipoate-dependent enzymes. Lipoyl-ACP can also act as a substrate although octanoyl-ACP is likely to be the physiological substrate. The chain is Octanoyltransferase from Thermoanaerobacter pseudethanolicus (strain ATCC 33223 / 39E) (Clostridium thermohydrosulfuricum).